Consider the following 147-residue polypeptide: Peptide deformylase 1 (147 aa).

Positions 90 and 132 each coordinate Fe cation. Residue Glu-133 is part of the active site. His-136 lines the Fe cation pocket.

The protein belongs to the polypeptide deformylase family. Requires Fe(2+) as cofactor.

It catalyses the reaction N-terminal N-formyl-L-methionyl-[peptide] + H2O = N-terminal L-methionyl-[peptide] + formate. In terms of biological role, removes the formyl group from the N-terminal Met of newly synthesized proteins. Requires at least a dipeptide for an efficient rate of reaction. N-terminal L-methionine is a prerequisite for activity but the enzyme has broad specificity at other positions. This Clostridium perfringens (strain 13 / Type A) protein is Peptide deformylase 1.